Reading from the N-terminus, the 445-residue chain is Phosphoglucosamine mutase (445 aa).

Serine 101 functions as the Phosphoserine intermediate in the catalytic mechanism. Positions 101, 240, 242, and 244 each coordinate Mg(2+). Serine 101 carries the phosphoserine modification.

It belongs to the phosphohexose mutase family. Mg(2+) is required as a cofactor. Post-translationally, activated by phosphorylation.

The enzyme catalyses alpha-D-glucosamine 1-phosphate = D-glucosamine 6-phosphate. In terms of biological role, catalyzes the conversion of glucosamine-6-phosphate to glucosamine-1-phosphate. The sequence is that of Phosphoglucosamine mutase from Pseudomonas fluorescens (strain Pf0-1).